The sequence spans 354 residues: Clavesin-1 (354 aa).

The CRAL-TRIO domain occupies 118–279; it reads IKRALIDGFP…EFGGTLPPYD (162 aa). The interval 317 to 354 is disordered; sequence RECSPKPMKRSQSVVEAGTLKHEEKGENENTQPLLALD. Positions 335–344 are enriched in basic and acidic residues; it reads TLKHEEKGEN. The segment covering 345–354 has biased composition (polar residues); it reads ENTQPLLALD.

As to quaternary structure, forms a complex with clathrin heavy chain and gamma-adaptin.

It localises to the golgi apparatus. It is found in the trans-Golgi network membrane. Its subcellular location is the early endosome membrane. The protein resides in the cytoplasmic vesicle. The protein localises to the clathrin-coated vesicle. Required for normal morphology of late endosomes and/or lysosomes in neurons. Binds phosphatidylinositol 3,5-bisphosphate (PtdIns(3,5)P2). In Mus musculus (Mouse), this protein is Clavesin-1 (Clvs1).